The chain runs to 92 residues: Large ribosomal subunit protein bL27 (92 aa).

The disordered stretch occupies residues 1–21 (MSKKKGVGSSRNGRDSESKRL). Positions 12-21 (NGRDSESKRL) are enriched in basic and acidic residues.

It belongs to the bacterial ribosomal protein bL27 family.

The protein is Large ribosomal subunit protein bL27 of Halothermothrix orenii (strain H 168 / OCM 544 / DSM 9562).